A 186-amino-acid chain; its full sequence is MYKLFGKWDLTEVEVADAGIKRYVNLDPVIVPHTSGKHARQQFNKSDITIVERLVNNVMRNAQNTGKKQIALRIVDEAFDIVNSKTKKNPVQVLVEAVSNAGPREEVVRLKYGGISVPKAVDTAPQRRVDHALRNISIGSNQTAFKSKRSAAECLASELIAASNRDAKCFSINRKDGKERVAKAAR.

It belongs to the universal ribosomal protein uS7 family. As to quaternary structure, part of the 30S ribosomal subunit.

In terms of biological role, one of the primary rRNA binding proteins, it binds directly to 16S rRNA where it nucleates assembly of the head domain of the 30S subunit. Is located at the subunit interface close to the decoding center. The polypeptide is Small ribosomal subunit protein uS7 (Methanococcoides burtonii (strain DSM 6242 / NBRC 107633 / OCM 468 / ACE-M)).